Reading from the N-terminus, the 148-residue chain is MQLHNLEYKKGSRNHKEKRVGRGHGSGLGKTSGRGQDGQKARKSGMVRLAFEGGQTPLYRRVPKVGFNNDRFANKYNVVTLISLVKYETKELTAEFMYVNKIAKNEDLPIKVIGNAVLPSGTVVSAHKFSKGALESISNSKAKAQILE.

Positions 1–10 are enriched in basic and acidic residues; it reads MQLHNLEYKK. The segment at 1 to 42 is disordered; sequence MQLHNLEYKKGSRNHKEKRVGRGHGSGLGKTSGRGQDGQKAR. Positions 11 to 22 are enriched in basic residues; that stretch reads GSRNHKEKRVGR. The segment covering 23-36 has biased composition (gly residues); that stretch reads GHGSGLGKTSGRGQ.

The protein belongs to the universal ribosomal protein uL15 family. Part of the 50S ribosomal subunit.

Its function is as follows. Binds to the 23S rRNA. This Ureaplasma urealyticum serovar 10 (strain ATCC 33699 / Western) protein is Large ribosomal subunit protein uL15.